The chain runs to 214 residues: Transmembrane emp24 domain-containing protein p24delta10 (214 aa).

An N-terminal signal peptide occupies residues 1–24 (MFLQSQKLWTMLLILAIWSPISHS). Residues 25–181 (LHFDLHSGRT…QDLNRSTNTK (157 aa)) are Lumenal-facing. A GOLD domain is found at 34–149 (TKCIAEDIKS…VEVMEFEVKS (116 aa)). Residues 164–177 (LRDREEEMQDLNRS) adopt a coiled-coil conformation. R167 is subject to Omega-N-methylated arginine. Residue N175 is glycosylated (N-linked (GlcNAc...) asparagine). Residues 182–202 (MAWLSVLSFFVCIGVAGMQFL) form a helical membrane-spanning segment. Over 203–214 (HLKTFFEKKKVI) the chain is Cytoplasmic. Positions 207 to 208 (FF) match the COPII vesicle coat-binding motif. Positions 207–214 (FFEKKKVI) match the COPI vesicle coat-binding motif.

The protein belongs to the EMP24/GP25L family. In terms of assembly, probably oligomerizes with other members of the EMP24/GP25L family. Associates with the COPI vesicle coat (coatomer). Associates with the COPII vesicle coat (coatomer).

The protein resides in the endoplasmic reticulum membrane. The protein localises to the golgi apparatus. Its subcellular location is the cis-Golgi network membrane. It is found in the golgi stack membrane. Involved in vesicular protein trafficking. Mainly functions in the early secretory pathway. Thought to act as cargo receptor at the lumenal side for incorporation of secretory cargo molecules into transport vesicles and to be involved in vesicle coat formation at the cytoplasmic side. In Arabidopsis thaliana (Mouse-ear cress), this protein is Transmembrane emp24 domain-containing protein p24delta10.